A 97-amino-acid chain; its full sequence is Ataxin-7-like protein 3B (97 aa).

The segment at 76-97 is disordered; the sequence is SLPGDPGDGPQTELQRSPPEFQ. Residue Ser92 is modified to Phosphoserine.

This sequence belongs to the SGF11 family. In terms of assembly, interacts strongly with ENY2. Interacts weakly with USP22.

The protein localises to the cytoplasm. By binding to ENY2, interferes with the nuclear functions of the deubiquitinase (DUB) module of the SAGA complex which consists of ENY2, ATXN7, ATXN7L3 and the histone deubiquitinating component USP22. Affects USP22 DUB activity toward histones indirectly by changing the subcellular distribution of ENY2 and altering ENY2 availability for ATXN7L3 interaction. Regulates H2B monoubiquitination (H2Bub1) levels through cytoplasmic sequestration of ENY2 resulting in loss of nuclear ENY2-ATXN7L3 association which destabilizes ATXN7L3. Affects protein expression levels of ENY2 and ATXN7L3. The sequence is that of Ataxin-7-like protein 3B (Atxn7l3b) from Mus musculus (Mouse).